The following is a 228-amino-acid chain: ATP-dependent dethiobiotin synthetase BioD (228 aa).

An ATP-binding site is contributed by Asp-13–Val-18. Thr-17 contacts Mg(2+). Lys-38 is a catalytic residue. ATP contacts are provided by residues Asp-55, Glu-116–Gly-119, Asn-176–Arg-177, and Pro-205–Ile-207. Mg(2+) contacts are provided by Asp-55 and Glu-116.

This sequence belongs to the dethiobiotin synthetase family. Homodimer. Mg(2+) is required as a cofactor.

Its subcellular location is the cytoplasm. The enzyme catalyses (7R,8S)-7,8-diammoniononanoate + CO2 + ATP = (4R,5S)-dethiobiotin + ADP + phosphate + 3 H(+). The protein operates within cofactor biosynthesis; biotin biosynthesis; biotin from 7,8-diaminononanoate: step 1/2. Its function is as follows. Catalyzes a mechanistically unusual reaction, the ATP-dependent insertion of CO2 between the N7 and N8 nitrogen atoms of 7,8-diaminopelargonic acid (DAPA, also called 7,8-diammoniononanoate) to form a ureido ring. In Vibrio parahaemolyticus serotype O3:K6 (strain RIMD 2210633), this protein is ATP-dependent dethiobiotin synthetase BioD.